A 201-amino-acid chain; its full sequence is dTTP/UTP pyrophosphatase (201 aa).

D76 functions as the Proton acceptor in the catalytic mechanism.

It belongs to the Maf family. YhdE subfamily. A divalent metal cation serves as cofactor.

It is found in the cytoplasm. It catalyses the reaction dTTP + H2O = dTMP + diphosphate + H(+). It carries out the reaction UTP + H2O = UMP + diphosphate + H(+). In terms of biological role, nucleoside triphosphate pyrophosphatase that hydrolyzes dTTP and UTP. May have a dual role in cell division arrest and in preventing the incorporation of modified nucleotides into cellular nucleic acids. The protein is dTTP/UTP pyrophosphatase of Neisseria meningitidis serogroup A / serotype 4A (strain DSM 15465 / Z2491).